A 160-amino-acid polypeptide reads, in one-letter code: SsrA-binding protein (160 aa).

The disordered stretch occupies residues 130–160 (LAKGKKKHDKRADQKEQDWQRQKQRLMKHKV). Positions 139-150 (KRADQKEQDWQR) are enriched in basic and acidic residues. The segment covering 151 to 160 (QKQRLMKHKV) has biased composition (basic residues).

This sequence belongs to the SmpB family.

Its subcellular location is the cytoplasm. Functionally, required for rescue of stalled ribosomes mediated by trans-translation. Binds to transfer-messenger RNA (tmRNA), required for stable association of tmRNA with ribosomes. tmRNA and SmpB together mimic tRNA shape, replacing the anticodon stem-loop with SmpB. tmRNA is encoded by the ssrA gene; the 2 termini fold to resemble tRNA(Ala) and it encodes a 'tag peptide', a short internal open reading frame. During trans-translation Ala-aminoacylated tmRNA acts like a tRNA, entering the A-site of stalled ribosomes, displacing the stalled mRNA. The ribosome then switches to translate the ORF on the tmRNA; the nascent peptide is terminated with the 'tag peptide' encoded by the tmRNA and targeted for degradation. The ribosome is freed to recommence translation, which seems to be the essential function of trans-translation. This is SsrA-binding protein from Alkalilimnicola ehrlichii (strain ATCC BAA-1101 / DSM 17681 / MLHE-1).